The chain runs to 275 residues: uncharacterized protein (275 aa).

Residues 75-157 (AKELIKNRRL…AELKQAAEQG (83 aa)) adopt a coiled-coil conformation.

This is an uncharacterized protein from Bacillus subtilis (strain 168).